Here is a 281-residue protein sequence, read N- to C-terminus: 2-dehydro-3-deoxyphosphooctonate aldolase (281 aa).

This sequence belongs to the KdsA family.

It localises to the cytoplasm. The catalysed reaction is D-arabinose 5-phosphate + phosphoenolpyruvate + H2O = 3-deoxy-alpha-D-manno-2-octulosonate-8-phosphate + phosphate. It functions in the pathway carbohydrate biosynthesis; 3-deoxy-D-manno-octulosonate biosynthesis; 3-deoxy-D-manno-octulosonate from D-ribulose 5-phosphate: step 2/3. It participates in bacterial outer membrane biogenesis; lipopolysaccharide biosynthesis. In Pseudomonas paraeruginosa (strain DSM 24068 / PA7) (Pseudomonas aeruginosa (strain PA7)), this protein is 2-dehydro-3-deoxyphosphooctonate aldolase.